The following is a 189-amino-acid chain: Phosphomevalonate kinase (189 aa).

ATP contacts are provided by residues Lys10 to Asp16 and Arg138. Asn168 lines the substrate pocket.

Its subcellular location is the cytoplasm. The protein localises to the cytosol. It catalyses the reaction (R)-5-phosphomevalonate + ATP = (R)-5-diphosphomevalonate + ADP. It functions in the pathway isoprenoid biosynthesis; isopentenyl diphosphate biosynthesis via mevalonate pathway; isopentenyl diphosphate from (R)-mevalonate: step 2/3. The protein is Phosphomevalonate kinase of Drosophila melanogaster (Fruit fly).